Here is a 307-residue protein sequence, read N- to C-terminus: N-acetylmuramic acid 6-phosphate etherase (307 aa).

Residues 62–225 (VVDAFRVGGR…TTASMIRIGK (164 aa)) enclose the SIS domain. The Proton donor role is filled by Glu90. Glu121 is a catalytic residue.

The protein belongs to the GCKR-like family. MurNAc-6-P etherase subfamily. Homodimer.

It carries out the reaction N-acetyl-D-muramate 6-phosphate + H2O = N-acetyl-D-glucosamine 6-phosphate + (R)-lactate. It functions in the pathway amino-sugar metabolism; 1,6-anhydro-N-acetylmuramate degradation. Its pathway is amino-sugar metabolism; N-acetylmuramate degradation. The protein operates within cell wall biogenesis; peptidoglycan recycling. In terms of biological role, specifically catalyzes the cleavage of the D-lactyl ether substituent of MurNAc 6-phosphate, producing GlcNAc 6-phosphate and D-lactate. Together with AnmK, is also required for the utilization of anhydro-N-acetylmuramic acid (anhMurNAc) either imported from the medium or derived from its own cell wall murein, and thus plays a role in cell wall recycling. This chain is N-acetylmuramic acid 6-phosphate etherase, found in Brucella anthropi (strain ATCC 49188 / DSM 6882 / CCUG 24695 / JCM 21032 / LMG 3331 / NBRC 15819 / NCTC 12168 / Alc 37) (Ochrobactrum anthropi).